The following is a 324-amino-acid chain: Putative arsenical pump-driving ATPase (324 aa).

21–28 (GKGGVGKT) is a binding site for ATP.

Belongs to the arsA ATPase family.

It catalyses the reaction arsenite(in) + ATP + H2O = arsenite(out) + ADP + phosphate + H(+). In terms of biological role, anion-transporting ATPase. Catalyzes the extrusion of arsenite. This is Putative arsenical pump-driving ATPase from Methanothermobacter thermautotrophicus (strain ATCC 29096 / DSM 1053 / JCM 10044 / NBRC 100330 / Delta H) (Methanobacterium thermoautotrophicum).